The sequence spans 228 residues: UPF0173 metal-dependent hydrolase Smar_0891 (228 aa).

This sequence belongs to the UPF0173 family.

The protein is UPF0173 metal-dependent hydrolase Smar_0891 of Staphylothermus marinus (strain ATCC 43588 / DSM 3639 / JCM 9404 / F1).